The sequence spans 241 residues: Phosphoribosylaminoimidazole-succinocarboxamide synthase (241 aa).

The protein belongs to the SAICAR synthetase family.

The enzyme catalyses 5-amino-1-(5-phospho-D-ribosyl)imidazole-4-carboxylate + L-aspartate + ATP = (2S)-2-[5-amino-1-(5-phospho-beta-D-ribosyl)imidazole-4-carboxamido]succinate + ADP + phosphate + 2 H(+). It participates in purine metabolism; IMP biosynthesis via de novo pathway; 5-amino-1-(5-phospho-D-ribosyl)imidazole-4-carboxamide from 5-amino-1-(5-phospho-D-ribosyl)imidazole-4-carboxylate: step 1/2. The polypeptide is Phosphoribosylaminoimidazole-succinocarboxamide synthase (Deinococcus geothermalis (strain DSM 11300 / CIP 105573 / AG-3a)).